A 293-amino-acid chain; its full sequence is Phosphatidylglycerol--prolipoprotein diacylglyceryl transferase (293 aa).

Transmembrane regions (helical) follow at residues 45 to 65 (FELRWYSTLILMGFLISYFVA), 81 to 101 (ELIFYGVIAGIVGARLYYVLF), 115 to 135 (IWEGGLAIHGAVIGALLTGFL), and 144 to 164 (FTFLQATDLFTSVLPLGQAIG). Arg-165 provides a ligand contact to a 1,2-diacyl-sn-glycero-3-phospho-(1'-sn-glycerol). Helical transmembrane passes span 204–224 (PTFLYESIWDLLVFFMLSVYF), 231–249 (HGEVTCLYFVLYSLGRIVI), and 262–282 (IKAAQLLSAVLILLGFTGFLI).

This sequence belongs to the Lgt family.

Its subcellular location is the cell inner membrane. It carries out the reaction L-cysteinyl-[prolipoprotein] + a 1,2-diacyl-sn-glycero-3-phospho-(1'-sn-glycerol) = an S-1,2-diacyl-sn-glyceryl-L-cysteinyl-[prolipoprotein] + sn-glycerol 1-phosphate + H(+). It participates in protein modification; lipoprotein biosynthesis (diacylglyceryl transfer). Catalyzes the transfer of the diacylglyceryl group from phosphatidylglycerol to the sulfhydryl group of the N-terminal cysteine of a prolipoprotein, the first step in the formation of mature lipoproteins. The sequence is that of Phosphatidylglycerol--prolipoprotein diacylglyceryl transferase from Thermotoga maritima (strain ATCC 43589 / DSM 3109 / JCM 10099 / NBRC 100826 / MSB8).